A 245-amino-acid chain; its full sequence is Gem-associated protein 2 (245 aa).

It belongs to the gemin-2 family. As to quaternary structure, component of the core survival motor neuron (SMN) complex composed of Smn, Gem2, Gem3, rig/Gem5 and one of 3 almost identical Gem4 paralogs encoded by Glos/Gem4a, Gem4b or Gem4c. Part of a minimal SMN complex composed of Smn and Gem2 only; this complex is active in UsnRNP assembly. The SMN complex associates with the entire set of spliceosomal snRNP Sm proteins, SmB, SmD1, SmD2, SmD3, SmE, SmF and SmG, and with the snRNP-specific proteins snRNP-U1-70K, U2A, snf/U1A and U5-116KD. As to expression, expressed in nurse cells and oocytes.

It localises to the cytoplasm. The protein localises to the U-body. Functionally, component of the survival motor neuron (SMN) complex that catalyzes the assembly of small nuclear ribonucleoproteins (snRNPs), the building blocks of the spliceosome, and thereby plays an important role in the splicing of cellular pre-mRNAs. Most spliceosomal snRNPs contain a common set of Sm proteins SNRPB, SNRPD1, SNRPD2, SNRPD3, SNRPE, SNRPF and SNRPG that assemble in a heptameric protein ring on the Sm site of the small nuclear RNA to form the core snRNP (Sm core). In the cytosol, the Sm proteins SNRPD1, SNRPD2, SNRPE, SNRPF and SNRPG (5Sm) are trapped in an inactive 6S pICln-Sm complex by the chaperone CLNS1A that controls the assembly of the core snRNP. To assemble core snRNPs, the SMN complex accepts the trapped 5Sm proteins from CLNS1A. Binding of snRNA inside 5Sm ultimately triggers eviction of the SMN complex, thereby allowing binding of SNRPD3 and SNRPB to complete assembly of the core snRNP. Within the SMN complex, GEMIN2 constrains the conformation of 5Sm, thereby promoting 5Sm binding to snRNA containing the snRNP code (a nonameric Sm site and a 3'-adjacent stem-loop), thus preventing progression of assembly until a cognate substrate is bound. Involved in adult motor function. This Drosophila melanogaster (Fruit fly) protein is Gem-associated protein 2.